We begin with the raw amino-acid sequence, 764 residues long: 5-methyltetrahydropteroyltriglutamate--homocysteine methyltransferase (764 aa).

5-methyltetrahydropteroyltri-L-glutamate-binding positions include 16 to 19 (RELK) and lysine 117. L-homocysteine contacts are provided by residues 442-444 (IGS) and glutamate 495. Residues 442–444 (IGS) and glutamate 495 contribute to the L-methionine site. Residues 526 to 527 (RC) and tryptophan 572 contribute to the 5-methyltetrahydropteroyltri-L-glutamate site. An L-homocysteine-binding site is contributed by aspartate 610. Residue aspartate 610 coordinates L-methionine. A 5-methyltetrahydropteroyltri-L-glutamate-binding site is contributed by glutamate 616. Histidine 652, cysteine 654, and glutamate 676 together coordinate Zn(2+). Residue histidine 705 is the Proton donor of the active site. Cysteine 737 is a binding site for Zn(2+).

Belongs to the vitamin-B12 independent methionine synthase family. The cofactor is Zn(2+).

The catalysed reaction is 5-methyltetrahydropteroyltri-L-glutamate + L-homocysteine = tetrahydropteroyltri-L-glutamate + L-methionine. Its pathway is amino-acid biosynthesis; L-methionine biosynthesis via de novo pathway; L-methionine from L-homocysteine (MetE route): step 1/1. Functionally, catalyzes the transfer of a methyl group from 5-methyltetrahydrofolate to homocysteine resulting in methionine formation. The polypeptide is 5-methyltetrahydropteroyltriglutamate--homocysteine methyltransferase (Bordetella bronchiseptica (strain ATCC BAA-588 / NCTC 13252 / RB50) (Alcaligenes bronchisepticus)).